We begin with the raw amino-acid sequence, 299 residues long: MKLVFLGTSAAQPTENRGLSCICLEREGEVLMFDAGEAAQISYMKSGLGWNKKMKIFVTHLHGDHCVGILGLLQTMSMQNRTESLEIFGPSGIEEFIAANIKVLNFGLSFPILINTIKDEKIFEDEKFLIRTCKANHSIIAFSYLFEEKDKPGRFNVEKAKELGIPEGELWNKLQNGNEITVNEKIIKPEQVLGERRPGKKIGISGDTMPTKELEEFFEECDYLVFDSTFLEAEKQKAQDTCHSTAKQAATVAKNAKVKNLVLTHFSARYRDEVEHLREAKEIHDSVITAKDLLEIEIK.

Zn(2+)-binding residues include H60, H62, D64, H65, H137, D207, and H265. The active-site Proton acceptor is D64.

Belongs to the RNase Z family. In terms of assembly, homodimer. It depends on Zn(2+) as a cofactor.

The enzyme catalyses Endonucleolytic cleavage of RNA, removing extra 3' nucleotides from tRNA precursor, generating 3' termini of tRNAs. A 3'-hydroxy group is left at the tRNA terminus and a 5'-phosphoryl group is left at the trailer molecule.. Zinc phosphodiesterase, which displays some tRNA 3'-processing endonuclease activity. Probably involved in tRNA maturation, by removing a 3'-trailer from precursor tRNA. The protein is Ribonuclease Z of Nitrosopumilus maritimus (strain SCM1).